The following is a 389-amino-acid chain: Epidermis-specific secreted glycoprotein EP1 (389 aa).

Residues M1–T24 form the signal peptide. A glycan (N-linked (GlcNAc...) (complex) asparagine) is linked at N29. One can recognise a Bulb-type lectin domain in the interval M88–P193. N-linked (GlcNAc...) asparagine glycans are attached at residues N103, N230, and N235. N-linked (GlcNAc...) (high mannose) asparagine glycosylation occurs at N274.

In 14-day old seedlings, expressed in the epidermis and apical dome of the shoot and in the hypocotyl, cotyledon and epidermis of the root. In developing seeds, expressed in both the inner and outer epidermis of the integument.

The protein localises to the secreted. May be involved in the limitation of water flow through the outer epidermal cell wall, either by direct modification of wall structure or as a signal instructing the protoplast to restrict water transport across the cell wall. The polypeptide is Epidermis-specific secreted glycoprotein EP1 (EP1) (Daucus carota (Wild carrot)).